The primary structure comprises 464 residues: JmjC domain-containing protein 1 (464 aa).

Residues 182–349 (LYAKDMHLFR…QMYTALKEQY (168 aa)) enclose the JmjC domain.

The protein is JmjC domain-containing protein 1 (jmj1) of Schizosaccharomyces pombe (strain 972 / ATCC 24843) (Fission yeast).